The sequence spans 445 residues: Homogentisate 1,2-dioxygenase (445 aa).

Lys98 bears the N6-acetyllysine mark. His335, Glu341, and His371 together coordinate Fe cation. Residue Lys414 is modified to N6-succinyllysine.

The protein belongs to the homogentisate dioxygenase family. In terms of assembly, homohexamer arranged as a dimer of trimers. The cofactor is Fe cation.

It catalyses the reaction homogentisate + O2 = 4-maleylacetoacetate + H(+). Its pathway is amino-acid degradation; L-phenylalanine degradation; acetoacetate and fumarate from L-phenylalanine: step 4/6. Catalyzes the conversion of homogentisate to maleylacetoacetate. The chain is Homogentisate 1,2-dioxygenase (Hgd) from Mus musculus (Mouse).